A 414-amino-acid polypeptide reads, in one-letter code: Protein DNA-DAMAGE INDUCIBLE 1 (414 aa).

Residues Met-1–Ser-76 enclose the Ubiquitin-like domain. Residues Leu-213–Met-292 enclose the Peptidase A2 domain. Residue Asp-218 is part of the active site. Residues Glu-332–Pro-374 are disordered. Residues Asn-355–Glu-372 are compositionally biased toward polar residues. Positions Pro-374 to Gly-414 constitute a UBA domain.

It belongs to the DDI1 family. Homodimer.

Its subcellular location is the cytoplasm. It is found in the cytosol. In terms of biological role, receptor of ubiquitinated protein targeted to ubiquitin/proteasome-mediated proteolysis (UPP). Relatively weak affinity for both 'Lys-48'- and 'Lys-63'-linked ubiquitin chains with a slight preference for 'Lys-48-'linked chains of three or more ubiquitin units. The protein is Protein DNA-DAMAGE INDUCIBLE 1 of Arabidopsis thaliana (Mouse-ear cress).